The sequence spans 100 residues: uncharacterized protein (100 aa).

It localises to the mitochondrion. This is an uncharacterized protein from Arabidopsis thaliana (Mouse-ear cress).